The chain runs to 419 residues: 3-isopropylmalate dehydratase large subunit (419 aa).

Positions 302, 362, and 365 each coordinate [4Fe-4S] cluster.

The protein belongs to the aconitase/IPM isomerase family. LeuC type 2 subfamily. In terms of assembly, heterodimer of LeuC and LeuD. It depends on [4Fe-4S] cluster as a cofactor.

It carries out the reaction (2R,3S)-3-isopropylmalate = (2S)-2-isopropylmalate. It functions in the pathway amino-acid biosynthesis; L-leucine biosynthesis; L-leucine from 3-methyl-2-oxobutanoate: step 2/4. Its function is as follows. Catalyzes the isomerization between 2-isopropylmalate and 3-isopropylmalate, via the formation of 2-isopropylmaleate. The polypeptide is 3-isopropylmalate dehydratase large subunit (Sulfurimonas denitrificans (strain ATCC 33889 / DSM 1251) (Thiomicrospira denitrificans (strain ATCC 33889 / DSM 1251))).